Consider the following 1240-residue polypeptide: RNA-directed RNA polymerase VP2 (1240 aa).

Residues 516 to 764 (LVANYINKHM…KLYALFGARI (249 aa)) form the RdRp catalytic domain.

Belongs to the reoviridae RNA-directed RNA polymerase family.

Its subcellular location is the virion. It carries out the reaction RNA(n) + a ribonucleoside 5'-triphosphate = RNA(n+1) + diphosphate. In terms of biological role, RNA-directed RNA polymerase that is involved in transcription and genome replication. Following infection, it catalyzes the synthesis of fully conservative plus strands. After core assembly, which consists in recruitment of one capped plus-strand for each genomic segments and polymerase complexes, the polymerase switches mode and catalyzes the synthesis of complementary minus-strands. This Oncorhynchus keta (Chum salmon) protein is RNA-directed RNA polymerase VP2 (S2).